The following is a 214-amino-acid chain: Ribonuclease HII (214 aa).

An RNase H type-2 domain is found at 26–214 (EIVCGVDEAG…PVREAFDLIR (189 aa)). Asp-32, Glu-33, and Asp-124 together coordinate a divalent metal cation.

The protein belongs to the RNase HII family. Mn(2+) is required as a cofactor. It depends on Mg(2+) as a cofactor.

It is found in the cytoplasm. The enzyme catalyses Endonucleolytic cleavage to 5'-phosphomonoester.. In terms of biological role, endonuclease that specifically degrades the RNA of RNA-DNA hybrids. This Burkholderia pseudomallei (strain 1710b) protein is Ribonuclease HII.